The primary structure comprises 839 residues: Genome polyprotein (839 aa).

Positions 55-66 (TAEVGSHQSEPL) are enriched in polar residues. A disordered region spans residues 55 to 76 (TAEVGSHQSEPLKTSVDKPGSK). Short sequence motifs ((L)YPX(n)L motif) lie at residues 167–171 (YPHGL) and 200–205 (YPVWEL). Polar residues predominate over residues 496–510 (SGGFSTTVSTEQNVP). 2 disordered regions span residues 496–530 (SGGFSTTVSTEQNVPDPQVGITTPKDLKGKANKGK) and 773–792 (GDLESSVDDPRTDEDRRFES). Residues 766 to 836 (MLDRIAGGDL…RKLKGLFSQS (71 aa)) form an involved in P1-2A pentamerization region. Over residues 780–792 (DDPRTDEDRRFES) the composition is skewed to basic and acidic residues.

This sequence belongs to the picornaviridae polyprotein family. In terms of assembly, homodimer. Homomultimer; probably interacts with membranes in a multimeric form. Seems to assemble into amyloid-like fibers. Homopentamer. Homooligomer. As to quaternary structure, interacts with capsid protein VP2. Interacts with capsid protein VP3. In terms of assembly, interacts with capsid protein VP1. Interacts with capsid protein VP3. Interacts with capsid protein VP1. Interacts with capsid protein VP2. Specific enzymatic cleavages by viral protease in vivo yield a variety of precursors and mature proteins. Polyprotein processing intermediates are produced, such as P1-2A which is a functional precursor of the structural proteins, VP0 which is a VP4-VP2 precursor, VP1-2A precursor, 3ABC precursor which is a stable and catalytically active precursor of 3A, 3B and 3C proteins, 3AB and 3CD precursors. The assembly signal 2A is removed from VP1-2A by a host protease, possibly host Cathepsin L. This cleavage occurs over a region of 3 amino-acids probably generating VP1 proteins with heterogeneous C-termini. In terms of processing, during virion maturation, immature virions are rendered infectious following cleavage of VP0 into VP4 and VP2. This maturation seems to be an autocatalytic event triggered by the presence of RNA in the capsid and is followed by a conformational change of the particle. Post-translationally, the assembly signal 2A is removed from VP1-2A by a host protease, possibly host Cathepsin L in naked virions. This cleavage does not occur in enveloped virions. This cleavage occurs over a region of 3 amino-acids probably generating VP1 proteins with heterogeneous C-termini. Unlike other picornaviruses, does not seem to be myristoylated.

It localises to the virion. It is found in the host endosome. Its subcellular location is the host multivesicular body. The protein localises to the host membrane. Capsid proteins VP1, VP2, and VP3 form a closed capsid enclosing the viral positive strand RNA genome. All these proteins contain a beta-sheet structure called beta-barrel jelly roll. Together they form an icosahedral capsid (T=3) composed of 60 copies of each VP1, VP2, and VP3, with a diameter of approximately 300 Angstroms. VP1 is situated at the 12 fivefold axes, whereas VP2 and VP3 are located at the quasi-sixfold axes. The naked capsid interacts with the host receptor HAVCR1 to provide virion attachment to and probably entry into the target cell. In terms of biological role, VP0 precursor is a component of the immature procapsids. Its function is as follows. Plays a role in the assembly of the 12 pentamers into an icosahedral structure. Has not been detected in mature virions, supposedly owing to its small size. Functionally, precursor component of immature procapsids that corresponds to an extended form of the structural protein VP1. After maturation, possibly by the host Cathepsin L, the assembly signal 2A is cleaved to give rise to the mature VP1 protein. Affects membrane integrity and causes an increase in membrane permeability. In terms of biological role, functions as a viroporin. Affects membrane integrity and causes an increase in membrane permeability. Involved in host intracellular membrane rearrangements probably to give rise to the viral factories. Does not disrupt calcium homeostasis or glycoprotein trafficking. Antagonizes the innate immune response of the host by suppressing IFN-beta synthesis, which it achieves by interfering with the RIG-I/IFIH1 pathway. The sequence is that of Genome polyprotein from Callithrix (Owl-faced monkey).